A 182-amino-acid chain; its full sequence is Ribosome maturation factor RimM (182 aa).

The PRC barrel domain maps to 103 to 182 (EGDYYWKDLM…TIEVDWDPGF (80 aa)).

Belongs to the RimM family. In terms of assembly, binds ribosomal protein uS19.

Its subcellular location is the cytoplasm. In terms of biological role, an accessory protein needed during the final step in the assembly of 30S ribosomal subunit, possibly for assembly of the head region. Essential for efficient processing of 16S rRNA. May be needed both before and after RbfA during the maturation of 16S rRNA. It has affinity for free ribosomal 30S subunits but not for 70S ribosomes. This Klebsiella pneumoniae subsp. pneumoniae (strain ATCC 700721 / MGH 78578) protein is Ribosome maturation factor RimM.